The primary structure comprises 211 residues: Nucleoside triphosphate pyrophosphatase (211 aa).

Asp76 (proton acceptor) is an active-site residue.

It belongs to the Maf family. It depends on a divalent metal cation as a cofactor.

The protein resides in the cytoplasm. The enzyme catalyses a ribonucleoside 5'-triphosphate + H2O = a ribonucleoside 5'-phosphate + diphosphate + H(+). It catalyses the reaction a 2'-deoxyribonucleoside 5'-triphosphate + H2O = a 2'-deoxyribonucleoside 5'-phosphate + diphosphate + H(+). Nucleoside triphosphate pyrophosphatase. May have a dual role in cell division arrest and in preventing the incorporation of modified nucleotides into cellular nucleic acids. The chain is Nucleoside triphosphate pyrophosphatase from Saccharopolyspora erythraea (strain ATCC 11635 / DSM 40517 / JCM 4748 / NBRC 13426 / NCIMB 8594 / NRRL 2338).